Reading from the N-terminus, the 346-residue chain is D-fructose 1,6-bisphosphatase class 2/sedoheptulose 1,7-bisphosphatase 1 (346 aa).

Residues Asp33, Glu57, Asp97, and Glu100 each coordinate Mn(2+). Substrate-binding positions include 100 to 102 (EGT), Tyr131, 176 to 178 (RAR), and 198 to 200 (DGD). Glu225 contacts Mn(2+).

It belongs to the FBPase class 2 family. In terms of assembly, homotetramer. The cofactor is Mn(2+).

The enzyme catalyses beta-D-fructose 1,6-bisphosphate + H2O = beta-D-fructose 6-phosphate + phosphate. It carries out the reaction D-sedoheptulose 1,7-bisphosphate + H2O = D-sedoheptulose 7-phosphate + phosphate. It functions in the pathway carbohydrate biosynthesis; Calvin cycle. Its function is as follows. Catalyzes the hydrolysis of fructose 1,6-bisphosphate (Fru 1,6-P2) and sedoheptulose 1,7-bisphosphate (Sed 1,7-P2) to fructose 6-phosphate and sedoheptulose 7-phosphate, respectively. The chain is D-fructose 1,6-bisphosphatase class 2/sedoheptulose 1,7-bisphosphatase 1 from Acaryochloris marina (strain MBIC 11017).